We begin with the raw amino-acid sequence, 232 residues long: Phosphoribosylaminoimidazole-succinocarboxamide synthase (232 aa).

The protein belongs to the SAICAR synthetase family.

It catalyses the reaction 5-amino-1-(5-phospho-D-ribosyl)imidazole-4-carboxylate + L-aspartate + ATP = (2S)-2-[5-amino-1-(5-phospho-beta-D-ribosyl)imidazole-4-carboxamido]succinate + ADP + phosphate + 2 H(+). It participates in purine metabolism; IMP biosynthesis via de novo pathway; 5-amino-1-(5-phospho-D-ribosyl)imidazole-4-carboxamide from 5-amino-1-(5-phospho-D-ribosyl)imidazole-4-carboxylate: step 1/2. The protein is Phosphoribosylaminoimidazole-succinocarboxamide synthase of Finegoldia magna (strain ATCC 29328 / DSM 20472 / WAL 2508) (Peptostreptococcus magnus).